Reading from the N-terminus, the 612-residue chain is Elongation factor 4 (612 aa).

The tr-type G domain occupies 12–194 (SRIRNFSIIA…QIVEKVPAPA (183 aa)). Residues 24–29 (DHGKST) and 141–144 (NKID) each bind GTP.

Belongs to the TRAFAC class translation factor GTPase superfamily. Classic translation factor GTPase family. LepA subfamily.

It is found in the cell membrane. The catalysed reaction is GTP + H2O = GDP + phosphate + H(+). Functionally, required for accurate and efficient protein synthesis under certain stress conditions. May act as a fidelity factor of the translation reaction, by catalyzing a one-codon backward translocation of tRNAs on improperly translocated ribosomes. Back-translocation proceeds from a post-translocation (POST) complex to a pre-translocation (PRE) complex, thus giving elongation factor G a second chance to translocate the tRNAs correctly. Binds to ribosomes in a GTP-dependent manner. This Bacillus pumilus (strain SAFR-032) protein is Elongation factor 4.